The primary structure comprises 252 residues: N-acetylglucosaminyl-phosphatidylinositol de-N-acetylase (252 aa).

A helical transmembrane segment spans residues 2–22; it reads ELVGFLCVAVAVLTWGFLRVW. The Cytoplasmic segment spans residues 23–252; the sequence is NSAERMRSPE…YMRINSLRFL (230 aa).

It belongs to the PIGL family.

The protein resides in the endoplasmic reticulum membrane. It catalyses the reaction a 6-(N-acetyl-alpha-D-glucosaminyl)-1-(1,2-diacyl-sn-glycero-3-phospho)-1D-myo-inositol + H2O = a 6-(alpha-D-glucosaminyl)-1-(1,2-diacyl-sn-glycero-3-phospho)-1D-myo-inositol + acetate. It functions in the pathway glycolipid biosynthesis; glycosylphosphatidylinositol-anchor biosynthesis. In terms of biological role, catalyzes the second step of glycosylphosphatidylinositol (GPI) biosynthesis, which is the de-N-acetylation of N-acetylglucosaminyl-phosphatidylinositol. The protein is N-acetylglucosaminyl-phosphatidylinositol de-N-acetylase (Pigl) of Mus musculus (Mouse).